A 279-amino-acid polypeptide reads, in one-letter code: NADPH-dependent 7-cyano-7-deazaguanine reductase (279 aa).

Isoleucine 86–serine 88 is a binding site for substrate. Serine 88–lysine 89 contributes to the NADPH binding site. The Thioimide intermediate role is filled by cysteine 187. Catalysis depends on aspartate 194, which acts as the Proton donor. Histidine 226–glutamate 227 is a substrate binding site. Arginine 255–glycine 256 provides a ligand contact to NADPH.

This sequence belongs to the GTP cyclohydrolase I family. QueF type 2 subfamily. Homodimer.

It is found in the cytoplasm. The catalysed reaction is 7-aminomethyl-7-carbaguanine + 2 NADP(+) = 7-cyano-7-deazaguanine + 2 NADPH + 3 H(+). The protein operates within tRNA modification; tRNA-queuosine biosynthesis. Catalyzes the NADPH-dependent reduction of 7-cyano-7-deazaguanine (preQ0) to 7-aminomethyl-7-deazaguanine (preQ1). This is NADPH-dependent 7-cyano-7-deazaguanine reductase from Actinobacillus pleuropneumoniae serotype 3 (strain JL03).